The chain runs to 160 residues: Major strawberry allergen Fra a 1-2 (160 aa).

The protein belongs to the BetVI family. Monomer. Interacts with AP. As to expression, highly expressed in ripe red fruits. Expressed in roots and white fruits. Expressed at low levels in open flowers.

In terms of biological role, involved in the control of flavonoid biosynthesis in fruits, probably by binding directly to natural flavonoids. Binds the natural flavonoid myricetin with affinities in the low micromolar range. The chain is Major strawberry allergen Fra a 1-2 from Fragaria ananassa (Strawberry).